Reading from the N-terminus, the 316-residue chain is ATP synthase gamma chain (316 aa).

Belongs to the ATPase gamma chain family. In terms of assembly, F-type ATPases have 2 components, CF(1) - the catalytic core - and CF(0) - the membrane proton channel. CF(1) has five subunits: alpha(3), beta(3), gamma(1), delta(1), epsilon(1). CF(0) has three main subunits: a, b and c.

The protein localises to the cellular thylakoid membrane. Functionally, produces ATP from ADP in the presence of a proton gradient across the membrane. The gamma chain is believed to be important in regulating ATPase activity and the flow of protons through the CF(0) complex. The chain is ATP synthase gamma chain from Synechococcus sp. (strain CC9605).